We begin with the raw amino-acid sequence, 373 residues long: Queuine tRNA-ribosyltransferase (373 aa).

The active-site Proton acceptor is the D89. Substrate is bound by residues 89–93, D143, Q185, and G212; that span reads DSGGF. The RNA binding stretch occupies residues 243-249; that stretch reads GVGRPED. Residue D262 is the Nucleophile of the active site. Residues 267–271 form an RNA binding; important for wobble base 34 recognition region; sequence TRNAR. Zn(2+)-binding residues include C300, C302, C305, and H331.

This sequence belongs to the queuine tRNA-ribosyltransferase family. As to quaternary structure, homodimer. Within each dimer, one monomer is responsible for RNA recognition and catalysis, while the other monomer binds to the replacement base PreQ1. Zn(2+) serves as cofactor.

It catalyses the reaction 7-aminomethyl-7-carbaguanine + guanosine(34) in tRNA = 7-aminomethyl-7-carbaguanosine(34) in tRNA + guanine. It participates in tRNA modification; tRNA-queuosine biosynthesis. Functionally, catalyzes the base-exchange of a guanine (G) residue with the queuine precursor 7-aminomethyl-7-deazaguanine (PreQ1) at position 34 (anticodon wobble position) in tRNAs with GU(N) anticodons (tRNA-Asp, -Asn, -His and -Tyr). Catalysis occurs through a double-displacement mechanism. The nucleophile active site attacks the C1' of nucleotide 34 to detach the guanine base from the RNA, forming a covalent enzyme-RNA intermediate. The proton acceptor active site deprotonates the incoming PreQ1, allowing a nucleophilic attack on the C1' of the ribose to form the product. After dissociation, two additional enzymatic reactions on the tRNA convert PreQ1 to queuine (Q), resulting in the hypermodified nucleoside queuosine (7-(((4,5-cis-dihydroxy-2-cyclopenten-1-yl)amino)methyl)-7-deazaguanosine). This is Queuine tRNA-ribosyltransferase from Marinobacter nauticus (strain ATCC 700491 / DSM 11845 / VT8) (Marinobacter aquaeolei).